A 360-amino-acid polypeptide reads, in one-letter code: Phospho-N-acetylmuramoyl-pentapeptide-transferase (360 aa).

Helical transmembrane passes span 27-47, 73-93, 97-117, 145-165, 168-188, 199-219, 236-256, 263-283, 288-308, and 337-357; these read ILGV…VIVL, TMGG…WGDL, YVWV…VDDY, AFYL…VPLF, VAIP…VGTS, GLAI…AYLT, SGEL…FLWF, IFMG…IAVI, LVLF…ILQV, and KVIV…FATL.

This sequence belongs to the glycosyltransferase 4 family. MraY subfamily. Requires Mg(2+) as cofactor.

The protein resides in the cell inner membrane. It catalyses the reaction UDP-N-acetyl-alpha-D-muramoyl-L-alanyl-gamma-D-glutamyl-meso-2,6-diaminopimeloyl-D-alanyl-D-alanine + di-trans,octa-cis-undecaprenyl phosphate = di-trans,octa-cis-undecaprenyl diphospho-N-acetyl-alpha-D-muramoyl-L-alanyl-D-glutamyl-meso-2,6-diaminopimeloyl-D-alanyl-D-alanine + UMP. The protein operates within cell wall biogenesis; peptidoglycan biosynthesis. Functionally, catalyzes the initial step of the lipid cycle reactions in the biosynthesis of the cell wall peptidoglycan: transfers peptidoglycan precursor phospho-MurNAc-pentapeptide from UDP-MurNAc-pentapeptide onto the lipid carrier undecaprenyl phosphate, yielding undecaprenyl-pyrophosphoryl-MurNAc-pentapeptide, known as lipid I. In Marinomonas sp. (strain MWYL1), this protein is Phospho-N-acetylmuramoyl-pentapeptide-transferase.